The primary structure comprises 296 residues: Telomere repeat-binding factor 4 (296 aa).

The region spanning 1-62 (MGNQKLKWTA…WRNLSVAPGI (62 aa)) is the HTH myb-type domain. Residues 28-58 (WKNILRDPELAEQLSSRSNIDLKDKWRNLSV) constitute a DNA-binding region (H-T-H motif). The 75-residue stretch at 126–200 (NAPRYDGMIF…STQNFYKMND (75 aa)) folds into the H15 domain. A disordered region spans residues 197–232 (KMNDNSLVQRTPHVARPKESNTKSRQQTNSQGPSIS). Residues 219–232 (KSRQQTNSQGPSIS) are compositionally biased toward polar residues. The stretch at 245-282 (KLVEVENKLDVSKGAAEEIERLMKLAEEADEMLVIARE) forms a coiled coil.

The protein belongs to the histone H1/H5 family. SMH subfamily.

The protein localises to the nucleus. It localises to the chromosome. Its function is as follows. Binds preferentially double-stranded telomeric repeats. This is Telomere repeat-binding factor 4 from Arabidopsis thaliana (Mouse-ear cress).